The sequence spans 68 residues: Conotoxin Am6.8 (68 aa).

A signal peptide spans 1 to 24; it reads MIRMGFFLTLTVAVLLTSLTCSEA. The propeptide occupies 25–45; it reads VPTDKREMERLFDRILLKDQR. Glutamine 46 is modified (pyrrolidone carboxylic acid). 3 disulfides stabilise this stretch: cysteine 47-cysteine 55, cysteine 50-cysteine 60, and cysteine 54-cysteine 65.

The protein belongs to the conotoxin U superfamily. Expressed by the venom duct.

Its subcellular location is the secreted. Probable toxin. The sequence is that of Conotoxin Am6.8 from Conus amadis (Amadis cone).